Here is a 180-residue protein sequence, read N- to C-terminus: Large ribosomal subunit protein uL6c (180 aa).

Belongs to the universal ribosomal protein uL6 family. In terms of assembly, part of the 50S ribosomal subunit.

Its subcellular location is the plastid. The protein localises to the chloroplast. Binds 23S rRNA. This Pyropia yezoensis (Susabi-nori) protein is Large ribosomal subunit protein uL6c (rpl6).